Consider the following 1040-residue polypeptide: Multidrug resistance protein MdtB (1040 aa).

Transmembrane regions (helical) follow at residues 16–36 (FIMRPVATTLLMVAILLAGII), 347–367 (LMMAIALVVMIIYLFLRNIPA), 369–389 (IIPGVAVPLSLIGTFAVMVFL), 396–416 (LTLMALTIATGFVVDDAIVVI), 440–460 (IGFTIISLTFSLIAVLIPLLF), 472–492 (FAITLAVAILISAVVSLTLTP), 537–557 (WLTLSVALSTLLLSVLLWVFI), 863–883 (LGSTVWLIVAAVVAMYIVLGI), 888–908 (FIHPITILSTLPTAGVGALLA), 911–931 (IAGSELDVIAIIGIILLIGIV), 968–988 (ILMTTLAALLGALPLMLSTGV), and 998–1018 (IGMVGGLIVSQVLTLFTTPVI).

This sequence belongs to the resistance-nodulation-cell division (RND) (TC 2.A.6) family. MdtB subfamily. As to quaternary structure, part of a tripartite efflux system composed of MdtA, MdtB and MdtC. MdtB forms a heteromultimer with MdtC.

It localises to the cell inner membrane. In terms of biological role, the MdtABC tripartite complex confers resistance against novobiocin and deoxycholate. The protein is Multidrug resistance protein MdtB of Escherichia coli O7:K1 (strain IAI39 / ExPEC).